Consider the following 149-residue polypeptide: SPbeta prophage-derived putative transcriptional regulator YosT (149 aa).

This Bacillus subtilis (strain 168) protein is SPbeta prophage-derived putative transcriptional regulator YosT (yosT).